A 206-amino-acid polypeptide reads, in one-letter code: Glutathione S-transferase class-mu 28 kDa isozyme (206 aa).

The GST N-terminal domain occupies 1–81; the sequence is VKLIYFNGRG…FIARKHNMMG (81 aa). Glutathione-binding positions include Tyr5, 5–6, Arg11, 36–40, Leu48, 50–51, and 65–66; these read YF, WPKIK, IV, and ES. Positions 83–206 constitute a GST C-terminal domain; that stretch reads TDDEYYIIEK…YLSERHATAF (124 aa).

Belongs to the GST superfamily. Mu family. Homodimer.

The enzyme catalyses RX + glutathione = an S-substituted glutathione + a halide anion + H(+). Functionally, conjugation of reduced glutathione to a wide number of exogenous and endogenous hydrophobic electrophiles. In terms of biological role, GST isoenzymes appear to play a central role in the parasite detoxification system. Other functions are also suspected including a role in increasing the solubility of haematin in the parasite gut. The polypeptide is Glutathione S-transferase class-mu 28 kDa isozyme (Schistosoma japonicum (Blood fluke)).